Consider the following 191-residue polypeptide: Peptidyl-tRNA hydrolase (191 aa).

A tRNA-binding site is contributed by Tyr-16. The active-site Proton acceptor is His-21. TRNA-binding residues include Phe-66, Asn-68, and Asn-114.

It belongs to the PTH family. In terms of assembly, monomer.

It is found in the cytoplasm. It catalyses the reaction an N-acyl-L-alpha-aminoacyl-tRNA + H2O = an N-acyl-L-amino acid + a tRNA + H(+). Functionally, hydrolyzes ribosome-free peptidyl-tRNAs (with 1 or more amino acids incorporated), which drop off the ribosome during protein synthesis, or as a result of ribosome stalling. In terms of biological role, catalyzes the release of premature peptidyl moieties from peptidyl-tRNA molecules trapped in stalled 50S ribosomal subunits, and thus maintains levels of free tRNAs and 50S ribosomes. The protein is Peptidyl-tRNA hydrolase of Geotalea daltonii (strain DSM 22248 / JCM 15807 / FRC-32) (Geobacter daltonii).